The following is a 328-amino-acid chain: Pancreas transcription factor 1 subunit alpha (328 aa).

The bHLH domain occupies 163–215 (QLRQAANVRERRRMQSINDAFEGLRSHIPTLPYEKRLSKVDTLRLAIGYINFL). Disordered stretches follow at residues 259–278 (RGTRSPSPSDPDYGLPPLAG) and 305–328 (DPRKLNSKSSFNNIENEPPFEFVS).

Component of the pancreas transcription factor 1 complex (PTF1) which is composed of TCF3/p75, TCF12/p64 and PTF1A/p48. TCF3 is responsible for the nuclear import of the p48/p64 complex. Interacts with TCF3 and RBPSUH/RBP-Jkappa. Pancreas-specific (at protein level). Loss of expression is seen in ductal type pancreas cancers.

It is found in the nucleus. The protein localises to the cytoplasm. Functionally, transcription factor implicated in the cell fate determination in various organs. Binds to the E-box consensus sequence 5'-CANNTG-3'. Plays a role in early and late pancreas development and differentiation. Important for determining whether cells allocated to the pancreatic buds continue towards pancreatic organogenesis or revert back to duodenal fates. May be involved in the maintenance of exocrine pancreas-specific gene expression including ELA1 and amylase. Required for the formation of pancreatic acinar and ductal cells. Plays an important role in cerebellar development. Directly regulated by FOXN4 and RORC during retinal development, FOXN4-PTF1A pathway plays a central role in directing the differentiation of retinal progenitors towards horizontal and amacrine fates. The sequence is that of Pancreas transcription factor 1 subunit alpha (PTF1A) from Homo sapiens (Human).